A 128-amino-acid polypeptide reads, in one-letter code: ATP synthase epsilon chain (128 aa).

The segment at 98 to 128 (EALDMPSSTPEQAQIKDAAVRRARGQLRASR) is disordered. Residues 118 to 128 (RRARGQLRASR) are compositionally biased toward basic residues.

This sequence belongs to the ATPase epsilon chain family. F-type ATPases have 2 components, CF(1) - the catalytic core - and CF(0) - the membrane proton channel. CF(1) has five subunits: alpha(3), beta(3), gamma(1), delta(1), epsilon(1). CF(0) has three main subunits: a, b and c.

The protein localises to the cell inner membrane. Produces ATP from ADP in the presence of a proton gradient across the membrane. The protein is ATP synthase epsilon chain of Rhodopirellula baltica (strain DSM 10527 / NCIMB 13988 / SH1).